A 228-amino-acid polypeptide reads, in one-letter code: Prolactin-2B1 (228 aa).

The signal sequence occupies residues 1–31 (MLLSLTQMLSSRASSRLFLVSYLLLWENVVS). 2 disulfides stabilise this stretch: Cys-89/Cys-194 and Cys-203/Cys-228.

Belongs to the somatotropin/prolactin family. Expressed specifically in placenta. Expressed at high levels in trophoblast cells from both junctional and labyrinth zones of the chorioallantoic placenta the last week of gestation.

The protein resides in the secreted. The chain is Prolactin-2B1 (Prl2b1) from Mus musculus (Mouse).